The sequence spans 171 residues: Large ribosomal subunit protein bL9 (171 aa).

The protein belongs to the bacterial ribosomal protein bL9 family.

In terms of biological role, binds to the 23S rRNA. This chain is Large ribosomal subunit protein bL9, found in Rickettsia felis (strain ATCC VR-1525 / URRWXCal2) (Rickettsia azadi).